Consider the following 122-residue polypeptide: Large ribosomal subunit protein uL14 (122 aa).

Belongs to the universal ribosomal protein uL14 family. In terms of assembly, part of the 50S ribosomal subunit. Forms a cluster with proteins L3 and L19. In the 70S ribosome, L14 and L19 interact and together make contacts with the 16S rRNA in bridges B5 and B8.

Functionally, binds to 23S rRNA. Forms part of two intersubunit bridges in the 70S ribosome. The chain is Large ribosomal subunit protein uL14 from Thermosipho africanus (strain TCF52B).